The following is a 53-amino-acid chain: 20 kDa chaperonin (53 aa).

2 cpn-10 domain regions span residues 1-10 (YTSIKPLGDR) and 11-53 (VAEA…KITP).

It belongs to the GroES chaperonin family. Forms stable complexes with cpn60 in the presence of ATP. Homotetramer.

The protein resides in the plastid. It localises to the chloroplast. In terms of biological role, seems to function only as a co-chaperone, along with cpn60, and in certain cases is essential for the discharge of biologically active proteins from cpn60. The chain is 20 kDa chaperonin from Populus euphratica (Euphrates poplar).